Consider the following 574-residue polypeptide: Membrane protein insertase YidC (574 aa).

The chain crosses the membrane as a helical span at residues 6 to 26 (VFLIFAWLMVAALLWMEWGKE). Residues 65–85 (QAGAPGKVPATSTTTATPAAA) are disordered. 5 consecutive transmembrane segments (helical) span residues 350–370 (VIDY…FWVL), 376–396 (FLHN…LVLY), 447–467 (GGCL…WVLV), 491–511 (FILP…TPTP), and 525–545 (PLVF…YWVV).

Belongs to the OXA1/ALB3/YidC family. Type 1 subfamily. As to quaternary structure, interacts with the Sec translocase complex via SecD. Specifically interacts with transmembrane segments of nascent integral membrane proteins during membrane integration.

The protein localises to the cell inner membrane. Required for the insertion and/or proper folding and/or complex formation of integral membrane proteins into the membrane. Involved in integration of membrane proteins that insert both dependently and independently of the Sec translocase complex, as well as at least some lipoproteins. Aids folding of multispanning membrane proteins. The sequence is that of Membrane protein insertase YidC from Xanthomonas oryzae pv. oryzae (strain PXO99A).